Reading from the N-terminus, the 620-residue chain is Chaperone protein HtpG (620 aa).

The interval 1–339 (MAKHQFQTEI…SEDLPLNVSR (339 aa)) is a; substrate-binding. Positions 340-546 (ELLQENRILA…ASDPMAGMAA (207 aa)) are b. The tract at residues 547–620 (MFAQMGQEMP…RVASLATKAL (74 aa)) is c.

It belongs to the heat shock protein 90 family. In terms of assembly, homodimer.

The protein resides in the cytoplasm. Functionally, molecular chaperone. Has ATPase activity. This Sulfurovum sp. (strain NBC37-1) protein is Chaperone protein HtpG.